A 353-amino-acid polypeptide reads, in one-letter code: Ion-translocating oxidoreductase complex subunit D (353 aa).

4 helical membrane passes run I20–G40, I44–L64, S77–I108, and P123–L143. The residue at position 187 (T187) is an FMN phosphoryl threonine. 4 consecutive transmembrane segments (helical) span residues V214 to L234, W242 to L262, L267 to A287, and L301 to G318.

The protein belongs to the NqrB/RnfD family. In terms of assembly, the complex is composed of six subunits: RnfA, RnfB, RnfC, RnfD, RnfE and RnfG. The cofactor is FMN.

It localises to the cell inner membrane. Functionally, part of a membrane-bound complex that couples electron transfer with translocation of ions across the membrane. The protein is Ion-translocating oxidoreductase complex subunit D of Erwinia tasmaniensis (strain DSM 17950 / CFBP 7177 / CIP 109463 / NCPPB 4357 / Et1/99).